The chain runs to 268 residues: Ribonuclease P protein subunit p30 (268 aa).

Alanine 2 carries the post-translational modification N-acetylalanine. Serine 251 carries the post-translational modification Phosphoserine.

This sequence belongs to the eukaryotic/archaeal RNase P protein component 3 family. Component of nuclear RNase P and RNase MRP ribonucleoproteins. RNase P consists of a catalytic RNA moiety and about 10 protein subunits; POP1, POP4, POP5, POP7, RPP14, RPP21, RPP25, RPP30, RPP38 and RPP40. Within the RNase P complex, POP1, POP7 and RPP25 form the 'finger' subcomplex, POP5, RPP14, RPP40 and homodimeric RPP30 form the 'palm' subcomplex, and RPP21, POP4 and RPP38 form the 'wrist' subcomplex. All subunits of the RNase P complex interact with the catalytic RNA. Several subunits of RNase P are also part of the RNase MRP complex. RNase MRP consists of a catalytic RNA moiety and about 8 protein subunits; POP1, POP7, RPP25, RPP30, RPP38, RPP40 and possibly also POP4 and POP5.

Its subcellular location is the nucleus. It is found in the nucleolus. Component of ribonuclease P, a ribonucleoprotein complex that generates mature tRNA molecules by cleaving their 5'-ends. Also a component of the MRP ribonuclease complex, which cleaves pre-rRNA sequences. In Mus musculus (Mouse), this protein is Ribonuclease P protein subunit p30 (Rpp30).